The sequence spans 153 residues: Nucleoside diphosphate kinase (153 aa).

Positions 13, 61, 89, 95, 106, and 116 each coordinate ATP. Thr-95 is subject to Phosphothreonine. His-119 acts as the Pros-phosphohistidine intermediate in catalysis.

This sequence belongs to the NDK family. In terms of assembly, homohexamer and homotetramer. Interacts with TOM40 preferentially in an unfolded, unphosphorylated form. Mg(2+) serves as cofactor. Post-translationally, the N-terminus is blocked.

It is found in the cytoplasm. The protein localises to the mitochondrion intermembrane space. It catalyses the reaction a 2'-deoxyribonucleoside 5'-diphosphate + ATP = a 2'-deoxyribonucleoside 5'-triphosphate + ADP. The enzyme catalyses a ribonucleoside 5'-diphosphate + ATP = a ribonucleoside 5'-triphosphate + ADP. Major role in the synthesis of nucleoside triphosphates other than ATP. The ATP gamma phosphate is transferred to the NDP beta phosphate via a ping-pong mechanism, using a phosphorylated active-site intermediate. Required for repair of UV radiation- and etoposide-induced DNA damage. The polypeptide is Nucleoside diphosphate kinase (YNK1) (Saccharomyces cerevisiae (strain ATCC 204508 / S288c) (Baker's yeast)).